We begin with the raw amino-acid sequence, 195 residues long: 7-methyl-GTP pyrophosphatase (195 aa).

Asp-70 (proton acceptor) is an active-site residue.

It belongs to the Maf family. YceF subfamily. A divalent metal cation is required as a cofactor.

The protein localises to the cytoplasm. It carries out the reaction N(7)-methyl-GTP + H2O = N(7)-methyl-GMP + diphosphate + H(+). Nucleoside triphosphate pyrophosphatase that hydrolyzes 7-methyl-GTP (m(7)GTP). May have a dual role in cell division arrest and in preventing the incorporation of modified nucleotides into cellular nucleic acids. The sequence is that of 7-methyl-GTP pyrophosphatase from Shewanella sp. (strain MR-4).